The primary structure comprises 167 residues: MSKKPTKDKANGAKATKTIALNKRARHEYHLEERYEAGLALQGWEIKAIRAGRANIVDGYAYVRSGEIYLIGAQITPLIQASTHTVPVERRDRKLLLHRAEIDKVLTRVEREGYTLVPTALYWSSNKVKLEIALAKGKQNHDKRDAAKERDWQRDKQRVMRRHNRDA.

Over residues 139 to 158 the composition is skewed to basic and acidic residues; sequence QNHDKRDAAKERDWQRDKQR. The segment at 139 to 167 is disordered; that stretch reads QNHDKRDAAKERDWQRDKQRVMRRHNRDA.

It belongs to the SmpB family.

It is found in the cytoplasm. Functionally, required for rescue of stalled ribosomes mediated by trans-translation. Binds to transfer-messenger RNA (tmRNA), required for stable association of tmRNA with ribosomes. tmRNA and SmpB together mimic tRNA shape, replacing the anticodon stem-loop with SmpB. tmRNA is encoded by the ssrA gene; the 2 termini fold to resemble tRNA(Ala) and it encodes a 'tag peptide', a short internal open reading frame. During trans-translation Ala-aminoacylated tmRNA acts like a tRNA, entering the A-site of stalled ribosomes, displacing the stalled mRNA. The ribosome then switches to translate the ORF on the tmRNA; the nascent peptide is terminated with the 'tag peptide' encoded by the tmRNA and targeted for degradation. The ribosome is freed to recommence translation, which seems to be the essential function of trans-translation. The polypeptide is SsrA-binding protein (Xanthomonas oryzae pv. oryzae (strain PXO99A)).